The chain runs to 216 residues: Octanoyltransferase (216 aa).

Residues asparagine 35 to phenylalanine 213 enclose the BPL/LPL catalytic domain. Substrate is bound by residues arginine 77–histidine 84, serine 144–glycine 146, and glycine 157–serine 159. Cysteine 175 acts as the Acyl-thioester intermediate in catalysis.

The protein belongs to the LipB family.

Its subcellular location is the cytoplasm. It catalyses the reaction octanoyl-[ACP] + L-lysyl-[protein] = N(6)-octanoyl-L-lysyl-[protein] + holo-[ACP] + H(+). It participates in protein modification; protein lipoylation via endogenous pathway; protein N(6)-(lipoyl)lysine from octanoyl-[acyl-carrier-protein]: step 1/2. Catalyzes the transfer of endogenously produced octanoic acid from octanoyl-acyl-carrier-protein onto the lipoyl domains of lipoate-dependent enzymes. Lipoyl-ACP can also act as a substrate although octanoyl-ACP is likely to be the physiological substrate. This is Octanoyltransferase from Prochlorococcus marinus (strain MIT 9215).